The sequence spans 159 residues: Ornithine decarboxylase antizyme (159 aa).

This sequence belongs to the ODC antizyme family. As to quaternary structure, interacts with ODC1 and thereby sterically blocks ODC homodimerization.

Functionally, ornithine decarboxylase (ODC) antizyme protein that negatively regulates ODC activity and intracellular polyamine biosynthesis and uptake in response to increased intracellular polyamine levels. Binds to ODC monomers, inhibiting the assembly of the functional ODC homodimer, and targets the monomers for ubiquitin-independent proteolytic destruction by the 26S proteasome. The chain is Ornithine decarboxylase antizyme from Caenorhabditis elegans.